Here is a 997-residue protein sequence, read N- to C-terminus: Translation initiation factor IF-2 (997 aa).

The tract at residues 101–409 (ELAAEQAAAR…QHQDRRHEQV (309 aa)) is disordered. Composition is skewed to low complexity over residues 116-185 (AEAV…QAEP), 195-208 (AAPAQAVAEPVEPA), and 244-280 (PSAPAESPKSAKAEPAAAPKTTAKPGEIRRAAAPAAP). Positions 281 to 292 (DRAREEARRAAE) are enriched in basic and acidic residues. Gly residues predominate over residues 385-394 (RAGGKGGRGG). Residues 400-409 (QHQDRRHEQV) are compositionally biased toward basic and acidic residues. The region spanning 498 to 665 (PRAPVVTVMG…NVLLQAEILE (168 aa)) is the tr-type G domain. The G1 stretch occupies residues 507–514 (GHVDHGKT). Residue 507 to 514 (GHVDHGKT) participates in GTP binding. Residues 532 to 536 (GITQH) form a G2 region. Residues 553–556 (DTPG) form a G3 region. GTP contacts are provided by residues 553–557 (DTPGH) and 607–610 (NKID). The G4 stretch occupies residues 607–610 (NKID). The tract at residues 643–645 (SAK) is G5.

This sequence belongs to the TRAFAC class translation factor GTPase superfamily. Classic translation factor GTPase family. IF-2 subfamily.

The protein localises to the cytoplasm. One of the essential components for the initiation of protein synthesis. Protects formylmethionyl-tRNA from spontaneous hydrolysis and promotes its binding to the 30S ribosomal subunits. Also involved in the hydrolysis of GTP during the formation of the 70S ribosomal complex. The protein is Translation initiation factor IF-2 of Bordetella bronchiseptica (strain ATCC BAA-588 / NCTC 13252 / RB50) (Alcaligenes bronchisepticus).